A 152-amino-acid polypeptide reads, in one-letter code: Putative superoxide dismutase [Cu-Zn] (152 aa).

Positions 43, 45, and 60 each coordinate Cu cation. A disulfide bond links Cys54 and Cys144. The Zn(2+) site is built by His60, His68, His77, and Asp80. Position 118 (His118) interacts with Cu cation.

It belongs to the Cu-Zn superoxide dismutase family. Cu cation serves as cofactor. Zn(2+) is required as a cofactor.

The enzyme catalyses 2 superoxide + 2 H(+) = H2O2 + O2. Destroys radicals which are normally produced within the cells and which are toxic to biological systems. The chain is Putative superoxide dismutase [Cu-Zn] (SOD) from Orgyia pseudotsugata (Douglas-fir tussock moth).